Consider the following 423-residue polypeptide: AP-1 complex subunit mu-1 (423 aa).

Ser2 carries the N-acetylserine modification. Residues Thr152, Thr154, and Thr223 each carry the phosphothreonine modification. Residues 168-421 (KNEVFLDVIE…ITQNGDYQLR (254 aa)) enclose the MHD domain.

It belongs to the adaptor complexes medium subunit family. In terms of assembly, adaptor protein complex 1 (AP-1) is a heterotetramer composed of two large adaptins (gamma-type subunit AP1G1 and beta-type subunit AP1B1), a medium adaptin (mu-type subunit AP1M1 or AP1M2) and a small adaptin (sigma-type subunit AP1S1 or AP1S2 or AP1S3). Interacts with MARCHF11. Post-translationally, phosphorylation of membrane-bound AP1M1/AP1M2 increases its affinity for sorting signals.

It localises to the cytoplasmic vesicle. It is found in the clathrin-coated vesicle membrane. The protein localises to the golgi apparatus. In terms of biological role, subunit of clathrin-associated adaptor protein complex 1 that plays a role in protein sorting in the trans-Golgi network (TGN) and endosomes. The AP complexes mediate the recruitment of clathrin to membranes and the recognition of sorting signals within the cytosolic tails of transmembrane cargo molecules. The sequence is that of AP-1 complex subunit mu-1 from Bos taurus (Bovine).